A 371-amino-acid chain; its full sequence is 4-hydroxyphenylpyruvate dioxygenase-like protein (371 aa).

2 VOC domains span residues 7 to 135 and 160 to 328; these read RLCH…LLER and RVDH…VFTK. Positions 163, 258, and 339 each coordinate Fe cation.

Belongs to the 4HPPD family. The cofactor is Fe cation.

It localises to the mitochondrion. The catalysed reaction is 3-(4-hydroxyphenyl)pyruvate + O2 = (S)-4-hydroxymandelate + CO2. In terms of biological role, iron-dependent dioxygenase that catalyzes the conversion of 4-hydroxyphenylpyruvate (4-HPPA) to 4-hydroxymandelate (4-HMA) in the mitochondria, one of the steps in the biosynthesis of coenzyme Q10 from tyrosine. This chain is 4-hydroxyphenylpyruvate dioxygenase-like protein, found in Homo sapiens (Human).